Here is a 348-residue protein sequence, read N- to C-terminus: Dihydroorotase (348 aa).

Residues H17 and H19 each contribute to the Zn(2+) site. Substrate is bound by residues 19 to 21 (HLR) and N45. Residues K103, H140, and H178 each contribute to the Zn(2+) site. K103 is subject to N6-carboxylysine. Substrate is bound at residue H140. Residue L223 coordinates substrate. D251 serves as a coordination point for Zn(2+). D251 is an active-site residue. 2 residues coordinate substrate: H255 and A267.

It belongs to the metallo-dependent hydrolases superfamily. DHOase family. Class II DHOase subfamily. As to quaternary structure, homodimer. Requires Zn(2+) as cofactor.

The enzyme catalyses (S)-dihydroorotate + H2O = N-carbamoyl-L-aspartate + H(+). It participates in pyrimidine metabolism; UMP biosynthesis via de novo pathway; (S)-dihydroorotate from bicarbonate: step 3/3. In terms of biological role, catalyzes the reversible cyclization of carbamoyl aspartate to dihydroorotate. This chain is Dihydroorotase, found in Salmonella paratyphi B (strain ATCC BAA-1250 / SPB7).